Consider the following 576-residue polypeptide: MRPAAAKVPKWLLLALSALLPQWPAASAWELTILHTNDVHSRLEQTSDDSTKCLNASLCVGGVARLFTKVQQIRKEEPNVLFLDAGDQYQGTIWFTVYKGLEVAHFMNILGYDAMALGNHEFDNGVEGLIDPLLRNVKFPILSANIKARGPLAHQISGLFLPSKVLSVGGEVVGIVGYTSKETPFLSNPGTNLVFEDEISALQPEVDKLKTLNVNKIIALGHSGFEMDKLIAQKVRGVDIVVGGHSNTFLYTGNPPSKEVPAGKYPFIVTADDGRQVPVVQAYAFGKYLGYLKVEFDDKGNVITSYGNPILLNSSIPEDATIKADINQWRIKLDNYSTQELGRTIVYLDGSTQTCRFRECNMGNLICDAMINNNLRHPDEMFWNHVSMCIVNGGGIRSPIDEKNNGTITWENLAAVLPFGGTFDLVQLKGSTLKKAFEHSVHRYGQSTGEFLQVGGIHVVYDINRKPWNRVVQLEVLCTKCRVPIYEPLEMDKVYKVTLPSYLANGGDGFQMIKDELLKHDSGDQDISVVSEYISKMKVVYPAVEGRIKFSAASHYQGSFPLVILSFWAMILILYQ.

The N-terminal stretch at 1–28 (MRPAAAKVPKWLLLALSALLPQWPAASA) is a signal peptide. The Zn(2+) site is built by aspartate 38 and histidine 40. An intrachain disulfide couples cysteine 53 to cysteine 59. An N-linked (GlcNAc...) asparagine glycan is attached at asparagine 55. Residues aspartate 87, asparagine 119, histidine 222, and histidine 245 each coordinate Zn(2+). 2 N-linked (GlcNAc...) asparagine glycosylation sites follow: asparagine 313 and asparagine 335. 2 cysteine pairs are disulfide-bonded: cysteine 355-cysteine 360 and cysteine 367-cysteine 389. An AMP-binding site is contributed by arginine 356. Residue arginine 356 coordinates IMP. 2 residues coordinate AMP: asparagine 392 and arginine 397. IMP contacts are provided by asparagine 392 and arginine 397. An N-linked (GlcNAc...) asparagine glycan is attached at asparagine 405. Phenylalanine 419 is an AMP binding site. Phenylalanine 419 provides a ligand contact to IMP. A disulfide bond links cysteine 478 and cysteine 481. AMP is bound by residues tyrosine 502 and aspartate 508. Tyrosine 502 and aspartate 508 together coordinate IMP. Serine 551 carries the GPI-anchor amidated serine lipid modification. Residues 552 to 576 (AASHYQGSFPLVILSFWAMILILYQ) constitute a propeptide, removed in mature form.

This sequence belongs to the 5'-nucleotidase family. In terms of assembly, homodimer. Zn(2+) serves as cofactor. In terms of tissue distribution, expressed at high levels in the placenta, kidney, lung and stomach and at lower levels in the thymus, spleen, skeletal muscle and esophagus.

The protein resides in the cell membrane. It carries out the reaction a ribonucleoside 5'-phosphate + H2O = a ribonucleoside + phosphate. It catalyses the reaction a 2'-deoxyribonucleoside 5'-phosphate + H2O = a 2'-deoxyribonucleoside + phosphate. The catalysed reaction is dTMP + H2O = thymidine + phosphate. The enzyme catalyses CMP + H2O = cytidine + phosphate. It carries out the reaction IMP + H2O = inosine + phosphate. It catalyses the reaction AMP + H2O = adenosine + phosphate. The catalysed reaction is GMP + H2O = guanosine + phosphate. The enzyme catalyses UMP + H2O = uridine + phosphate. It carries out the reaction dAMP + H2O = 2'-deoxyadenosine + phosphate. It catalyses the reaction dCMP + H2O = 2'-deoxycytidine + phosphate. Its function is as follows. Catalyzes the hydrolysis of nucleotide monophosphates, releasing inorganic phosphate and the corresponding nucleoside. Hydrolyzes IMP. Shows a preference for ribonucleotide monophosphates over their equivalent deoxyribose forms. Although AMP is the preferred substrate can also hydrolyze UMP, GMP, CMP, dAMP, dCMP, dTMP, NAD and NMN. This chain is 5'-nucleotidase (Nt5e), found in Mus musculus (Mouse).